The sequence spans 397 residues: MSSKDIVLAFSGGLDTSFCIPYLQERGYAVHTVFADTGGVDAEERDFIEKRAAELGAASHVTVDGGPAIWEGFVKPFVWAGEGYQGQYPLLVSDRYLIVDAALKRAEELGTRIIAHGCTGMGNDQVRFDLAVKALGDYQIVAPIREIQKEHTQTRAYEQKYLEERGFGVRAKQKAYTINENLLGVTMSGGEIDRWEAPGEGARGWCAPRSAWPTEALTVTLKFVEGEAVALDGKALPGAQILAKLNTLFAQYGVGRGVYTGDTVIGLKGRIVFEAPGLISLLTAHRALEDAVLTKQQNRFKPDVARKWVELVYEGFYHDPLKTDIEAFLKSSQSKVNGEVTLETRGGRVDAVAVRSPHLLNAKGATYAQSADWGVEEAEGFIKLFGMSSTLYAQVNR.

Residues 9–17 (AFSGGLDTS) and A35 contribute to the ATP site. Residues Y88 and S93 each contribute to the L-citrulline site. Residue G117 coordinates ATP. L-aspartate is bound by residues T119, N123, and D124. N123 serves as a coordination point for L-citrulline. R127 provides a ligand contact to L-citrulline.

It belongs to the argininosuccinate synthase family. Type 1 subfamily. In terms of assembly, homotetramer.

It localises to the cytoplasm. The enzyme catalyses L-citrulline + L-aspartate + ATP = 2-(N(omega)-L-arginino)succinate + AMP + diphosphate + H(+). It functions in the pathway amino-acid biosynthesis; L-arginine biosynthesis; L-arginine from L-ornithine and carbamoyl phosphate: step 2/3. This Xanthomonas campestris pv. campestris (strain ATCC 33913 / DSM 3586 / NCPPB 528 / LMG 568 / P 25) protein is Argininosuccinate synthase.